The sequence spans 104 residues: UPF0145 protein TM1040_1243 (104 aa).

This sequence belongs to the UPF0145 family.

The chain is UPF0145 protein TM1040_1243 from Ruegeria sp. (strain TM1040) (Silicibacter sp.).